Consider the following 180-residue polypeptide: Acireductone dioxygenase (180 aa).

The Fe(2+) site is built by histidine 97, histidine 99, glutamate 103, and histidine 141. Ni(2+)-binding residues include histidine 97, histidine 99, glutamate 103, and histidine 141.

Belongs to the acireductone dioxygenase (ARD) family. Monomer. The cofactor is Fe(2+). Ni(2+) serves as cofactor.

It catalyses the reaction 1,2-dihydroxy-5-(methylsulfanyl)pent-1-en-3-one + O2 = 3-(methylsulfanyl)propanoate + CO + formate + 2 H(+). The catalysed reaction is 1,2-dihydroxy-5-(methylsulfanyl)pent-1-en-3-one + O2 = 4-methylsulfanyl-2-oxobutanoate + formate + 2 H(+). It functions in the pathway amino-acid biosynthesis; L-methionine biosynthesis via salvage pathway; L-methionine from S-methyl-5-thio-alpha-D-ribose 1-phosphate: step 5/6. Its function is as follows. Catalyzes 2 different reactions between oxygen and the acireductone 1,2-dihydroxy-3-keto-5-methylthiopentene (DHK-MTPene) depending upon the metal bound in the active site. Fe-containing acireductone dioxygenase (Fe-ARD) produces formate and 2-keto-4-methylthiobutyrate (KMTB), the alpha-ketoacid precursor of methionine in the methionine recycle pathway. Ni-containing acireductone dioxygenase (Ni-ARD) produces methylthiopropionate, carbon monoxide and formate, and does not lie on the methionine recycle pathway. The protein is Acireductone dioxygenase of Citrobacter koseri (strain ATCC BAA-895 / CDC 4225-83 / SGSC4696).